The chain runs to 568 residues: 3-(3-hydroxy-phenyl)propionate/3-hydroxycinnamic acid hydroxylase (568 aa).

Residues 13 to 42 (DVVIVGAGPVGLTLANILGLQGVRTMIVEE) and 278 to 288 (FRKGRMFLAGD) contribute to the FAD site.

The protein belongs to the PheA/TfdB FAD monooxygenase family. Requires FAD as cofactor.

It carries out the reaction 3-(3-hydroxyphenyl)propanoate + NADH + O2 + H(+) = 3-(2,3-dihydroxyphenyl)propanoate + NAD(+) + H2O. The enzyme catalyses (2E)-3-(3-hydroxyphenyl)prop-2-enoate + NADH + O2 + H(+) = (2E)-3-(2,3-dihydroxyphenyl)prop-2-enoate + NAD(+) + H2O. It functions in the pathway aromatic compound metabolism; 3-phenylpropanoate degradation. In terms of biological role, catalyzes the insertion of one atom of molecular oxygen into position 2 of the phenyl ring of 3-(3-hydroxyphenyl)propionate (3-HPP) and hydroxycinnamic acid (3HCI). In Mycobacterium sp. (strain JLS), this protein is 3-(3-hydroxy-phenyl)propionate/3-hydroxycinnamic acid hydroxylase.